Consider the following 147-residue polypeptide: Large ribosomal subunit protein uL15 (147 aa).

The tract at residues 21 to 49 is disordered; it reads RVGRGEGSKGKTAGRGTKGTKARAPVRPG.

Belongs to the universal ribosomal protein uL15 family. In terms of assembly, part of the 50S ribosomal subunit.

Binds to the 23S rRNA. The chain is Large ribosomal subunit protein uL15 from Tropheryma whipplei (strain TW08/27) (Whipple's bacillus).